A 373-amino-acid polypeptide reads, in one-letter code: Chaperone protein DnaJ (373 aa).

The J domain occupies 5-70 (DYYEVLGLQK…EKKSNYDQFG (66 aa)). Residues 132-214 (GVEKEITVNR…CRGNGNVRKT (83 aa)) form a CR-type zinc finger. Zn(2+) is bound by residues Cys145, Cys148, Cys162, Cys165, Cys188, Cys191, Cys202, and Cys205. CXXCXGXG motif repeat units follow at residues 145-152 (CEHCNGSG), 162-169 (CPTCSGTG), 188-195 (CDRCSGTG), and 202-209 (CTHCRGNG).

It belongs to the DnaJ family. Homodimer. The cofactor is Zn(2+).

The protein resides in the cytoplasm. Functionally, participates actively in the response to hyperosmotic and heat shock by preventing the aggregation of stress-denatured proteins and by disaggregating proteins, also in an autonomous, DnaK-independent fashion. Unfolded proteins bind initially to DnaJ; upon interaction with the DnaJ-bound protein, DnaK hydrolyzes its bound ATP, resulting in the formation of a stable complex. GrpE releases ADP from DnaK; ATP binding to DnaK triggers the release of the substrate protein, thus completing the reaction cycle. Several rounds of ATP-dependent interactions between DnaJ, DnaK and GrpE are required for fully efficient folding. Also involved, together with DnaK and GrpE, in the DNA replication of plasmids through activation of initiation proteins. This Clostridium botulinum (strain Alaska E43 / Type E3) protein is Chaperone protein DnaJ.